The chain runs to 165 residues: Nucleotide-binding protein SYNW1816 (165 aa).

The protein belongs to the YajQ family.

Its function is as follows. Nucleotide-binding protein. The chain is Nucleotide-binding protein SYNW1816 from Parasynechococcus marenigrum (strain WH8102).